We begin with the raw amino-acid sequence, 480 residues long: Protein nucleotidyltransferase YdiU (480 aa).

8 residues coordinate ATP: G86, G88, R89, K109, D121, G122, R172, and R179. Residue D248 is the Proton acceptor of the active site. The Mg(2+) site is built by N249 and D258. D258 contacts ATP.

This sequence belongs to the SELO family. Mg(2+) serves as cofactor. It depends on Mn(2+) as a cofactor.

The enzyme catalyses L-seryl-[protein] + ATP = 3-O-(5'-adenylyl)-L-seryl-[protein] + diphosphate. The catalysed reaction is L-threonyl-[protein] + ATP = 3-O-(5'-adenylyl)-L-threonyl-[protein] + diphosphate. It catalyses the reaction L-tyrosyl-[protein] + ATP = O-(5'-adenylyl)-L-tyrosyl-[protein] + diphosphate. It carries out the reaction L-histidyl-[protein] + UTP = N(tele)-(5'-uridylyl)-L-histidyl-[protein] + diphosphate. The enzyme catalyses L-seryl-[protein] + UTP = O-(5'-uridylyl)-L-seryl-[protein] + diphosphate. The catalysed reaction is L-tyrosyl-[protein] + UTP = O-(5'-uridylyl)-L-tyrosyl-[protein] + diphosphate. Nucleotidyltransferase involved in the post-translational modification of proteins. It can catalyze the addition of adenosine monophosphate (AMP) or uridine monophosphate (UMP) to a protein, resulting in modifications known as AMPylation and UMPylation. The chain is Protein nucleotidyltransferase YdiU from Salmonella typhi.